Consider the following 354-residue polypeptide: DNA integrity scanning protein DisA (354 aa).

In terms of domain architecture, DAC spans 6–144 (DDELKKILKI…GDIKYVLRDS (139 aa)). Residues G73, L91, and 104–108 (TRHRT) contribute to the ATP site.

It belongs to the DisA family. As to quaternary structure, homooctamer. Requires Mg(2+) as cofactor.

It catalyses the reaction 2 ATP = 3',3'-c-di-AMP + 2 diphosphate. In terms of biological role, participates in a DNA-damage check-point that is active prior to asymmetric division when DNA is damaged. DisA forms globular foci that rapidly scan along the chromosomes during sporulation, searching for lesions. When a lesion is present, DisA pauses at the lesion site. This triggers a cellular response that culminates in a temporary block in sporulation initiation. Functionally, also has diadenylate cyclase activity, catalyzing the condensation of 2 ATP molecules into cyclic di-AMP (c-di-AMP). c-di-AMP acts as a signaling molecule that couples DNA integrity with progression of sporulation. The rise in c-di-AMP level generated by DisA while scanning the chromosome, operates as a positive signal that advances sporulation; upon encountering a lesion, the DisA focus arrests at the damaged site and halts c-di-AMP synthesis. This chain is DNA integrity scanning protein DisA, found in Clostridium perfringens (strain SM101 / Type A).